A 444-amino-acid polypeptide reads, in one-letter code: EMI domain-containing protein 1 (444 aa).

Positions 1–22 (MGGPRAWTLLCLGLLLPGGGAA) are cleaved as a signal peptide. The EMI domain maps to 33 to 106 (RRNWCSYVVT…PGHSGVTCEE (74 aa)). 3 disulfide bridges follow: cysteine 37/cysteine 96, cysteine 62/cysteine 68, and cysteine 95/cysteine 104. Threonine 42 carries O-linked (Fuc) threonine glycosylation. N-linked (GlcNAc...) asparagine glycosylation occurs at asparagine 51. N-linked (GlcNAc...) asparagine glycosylation is present at asparagine 136. Disordered regions lie at residues 161–374 (EQTV…KSHW) and 404–444 (PDLG…SERS). The 151-residue stretch at 221–371 (GPPGPQGPPG…PGPKGDPGEK (151 aa)) folds into the Collagen-like domain. Over residues 222–231 (PPGPQGPPGR) the composition is skewed to pro residues. The span at 232 to 243 (PGQTGAAGTPGK) shows a compositional bias: low complexity. 2 stretches are compositionally biased toward pro residues: residues 244-264 (MGPPGPPGPPGPPGPPAPVGP) and 292-311 (PTGPPGPPGPPGPMGPPGLP).

As to quaternary structure, homo- or heteromers. In terms of processing, O-fucosylated at Thr-42 within the EMI domain by FUT10/POFUT3 and FUT11/POFUT4.

Its subcellular location is the secreted. It localises to the extracellular space. The protein resides in the extracellular matrix. This chain is EMI domain-containing protein 1 (Emid1), found in Mus musculus (Mouse).